Consider the following 179-residue polypeptide: Shikimate kinase (179 aa).

An ATP-binding site is contributed by 11–16 (GAGKTT). Position 15 (Thr15) interacts with Mg(2+). Substrate-binding residues include Asp33, Arg57, and Gly79. Arg118 is an ATP binding site. Substrate is bound at residue Arg140.

Belongs to the shikimate kinase family. Monomer. Mg(2+) serves as cofactor.

It localises to the cytoplasm. It carries out the reaction shikimate + ATP = 3-phosphoshikimate + ADP + H(+). The protein operates within metabolic intermediate biosynthesis; chorismate biosynthesis; chorismate from D-erythrose 4-phosphate and phosphoenolpyruvate: step 5/7. Catalyzes the specific phosphorylation of the 3-hydroxyl group of shikimic acid using ATP as a cosubstrate. This is Shikimate kinase from Bacteroides fragilis (strain ATCC 25285 / DSM 2151 / CCUG 4856 / JCM 11019 / LMG 10263 / NCTC 9343 / Onslow / VPI 2553 / EN-2).